The sequence spans 217 residues: Ras-related protein RABA2d (217 aa).

GTP is bound at residue 19–26; the sequence is GDSGVGKT. The short motif at 41–49 is the Effector region element; that stretch reads SKSTIGVEF. GTP contacts are provided by residues 67–71, 125–128, and 155–156; these read DTAGQ, NKAD, and SA. Positions 196–217 are disordered; it reads GQGTTINVEDTSGAGKRGCCST. S-geranylgeranyl cysteine attachment occurs at residues Cys-214 and Cys-215.

The protein belongs to the small GTPase superfamily. Rab family. Expressed in root tips.

The protein localises to the endosome membrane. It localises to the golgi apparatus. It is found in the trans-Golgi network membrane. Its function is as follows. Intracellular vesicle trafficking and protein transport. This Arabidopsis thaliana (Mouse-ear cress) protein is Ras-related protein RABA2d (RABA2D).